Consider the following 467-residue polypeptide: Hydroxyacid-oxoacid transhydrogenase, mitochondrial (467 aa).

Lys-445 is modified (N6-acetyllysine). Ser-452 carries the post-translational modification Phosphoserine.

It belongs to the iron-containing alcohol dehydrogenase family. Hydroxyacid-oxoacid transhydrogenase subfamily. In terms of tissue distribution, expressed in kidney and liver.

Its subcellular location is the mitochondrion. The catalysed reaction is (S)-3-hydroxybutanoate + 2-oxoglutarate = (R)-2-hydroxyglutarate + acetoacetate. It catalyses the reaction 4-hydroxybutanoate + 2-oxoglutarate = (R)-2-hydroxyglutarate + succinate semialdehyde. Its function is as follows. Catalyzes the cofactor-independent reversible oxidation of gamma-hydroxybutyrate (GHB) to succinic semialdehyde (SSA) coupled to reduction of 2-ketoglutarate (2-KG) to D-2-hydroxyglutarate (D-2-HG). L-3-hydroxybutyrate (L-3-OHB) is also a substrate for HOT when using 2-KG as hydrogen acceptor, resulting in the formation of D-2-HG. This chain is Hydroxyacid-oxoacid transhydrogenase, mitochondrial (Adhfe1), found in Rattus norvegicus (Rat).